The sequence spans 56 residues: uncharacterized protein (56 aa).

This is an uncharacterized protein from Saccharolobus islandicus (Sulfolobus islandicus).